The chain runs to 381 residues: Subtilisin amylosacchariticus (381 aa).

The N-terminal stretch at 1 to 29 is a signal peptide; it reads MRSKKLWISLLFALTLIFTMAFSNMSAQA. A propeptide spanning residues 30–106 is cleaved from the precursor; the sequence is AGKSSTEKKY…VEEDHIAHEY (77 aa). Residues 38–103 enclose the Inhibitor I9 domain; sequence KYIVGFKQTM…VAYVEEDHIA (66 aa). Q108 provides a ligand contact to Ca(2+). A Peptidase S8 domain is found at 111–380; the sequence is PYGISQIKAP…KGLINVQAAA (270 aa). Catalysis depends on D138, which acts as the Charge relay system. Position 147 (D147) interacts with Ca(2+). Catalysis depends on H170, which acts as the Charge relay system. Residues L181, N183, I185, V187, A275, Y277, and T280 each coordinate Ca(2+). S327 (charge relay system) is an active-site residue.

The protein belongs to the peptidase S8 family. Requires Ca(2+) as cofactor.

Its subcellular location is the secreted. The enzyme catalyses Hydrolysis of proteins with broad specificity for peptide bonds, and a preference for a large uncharged residue in P1. Hydrolyzes peptide amides.. Subtilisin is an extracellular alkaline serine protease, it catalyzes the hydrolysis of proteins and peptide amides. This Bacillus subtilis subsp. amylosacchariticus protein is Subtilisin amylosacchariticus (apr).